Reading from the N-terminus, the 334-residue chain is Tetratricopeptide repeat protein 24 (334 aa).

TPR repeat units lie at residues 35–68 (GPFY…CRQP), 72–105 (ATVL…HGSV), 112–145 (GRSF…AQDT), and 152–185 (WQAC…CQHE). Positions 220–258 (PGKLQTSRKAKTSARVQSSAEDAQESQWEGEASEGGHEK) are disordered. A compositionally biased stretch (polar residues) spans 233–246 (ARVQSSAEDAQESQ).

This Mus musculus (Mouse) protein is Tetratricopeptide repeat protein 24 (Ttc24).